A 182-amino-acid polypeptide reads, in one-letter code: UPF0423 protein BRA0381/BS1330_II0378 (182 aa).

The N-terminal stretch at 1-24 (MKNLFRTAALMVPLSLALAYGAQA) is a signal peptide.

This sequence belongs to the UPF0423 family.

This chain is UPF0423 protein BRA0381/BS1330_II0378, found in Brucella suis biovar 1 (strain 1330).